We begin with the raw amino-acid sequence, 149 residues long: General odorant-binding protein 99b (149 aa).

Residues 1–16 (MKVLIVLLLGLAFVLA) form the signal peptide. Cystine bridges form between C40–C71, C67–C125, and C114–C134.

This sequence belongs to the PBP/GOBP family. Expressed in adult olfactory system. Expressed in subsets of sensilla in both olfactory organs, the maxillary palps, and third antennal segments.

It is found in the secreted. Functionally, present in the aqueous fluid surrounding olfactory sensory dendrites and are thought to aid in the capture and transport of hydrophobic odorants into and through this fluid. The polypeptide is General odorant-binding protein 99b (Obp99b) (Drosophila melanogaster (Fruit fly)).